A 201-amino-acid polypeptide reads, in one-letter code: FMN-dependent NADH:quinone oxidoreductase (201 aa).

FMN-binding positions include Ser9 and 16–18 (SYS).

The protein belongs to the azoreductase type 1 family. Homodimer. FMN serves as cofactor.

The enzyme catalyses 2 a quinone + NADH + H(+) = 2 a 1,4-benzosemiquinone + NAD(+). It catalyses the reaction N,N-dimethyl-1,4-phenylenediamine + anthranilate + 2 NAD(+) = 2-(4-dimethylaminophenyl)diazenylbenzoate + 2 NADH + 2 H(+). Its function is as follows. Quinone reductase that provides resistance to thiol-specific stress caused by electrophilic quinones. In terms of biological role, also exhibits azoreductase activity. Catalyzes the reductive cleavage of the azo bond in aromatic azo compounds to the corresponding amines. In Mesomycoplasma hyopneumoniae (strain 232) (Mycoplasma hyopneumoniae), this protein is FMN-dependent NADH:quinone oxidoreductase.